The sequence spans 802 residues: Pyrophosphate-energized membrane proton pump 3 (802 aa).

The next 6 membrane-spanning stretches (helical) occupy residues 41–61, 66–86, 118–138, 160–180, 206–226, and 246–266; these read LNVR…FYMG, PIIV…VYLT, YGTI…IYLF, VAAF…GMWV, AGGF…AILY, and LPLL…FAQL. Residue Lys-273 coordinates substrate. Asp-276, Asp-280, and Asp-306 together coordinate Mg(2+). 5 helical membrane-spanning segments follow: residues 348–368, 386–406, 421–441, 468–491, and 511–531; these read FILF…IGIL, MVVL…TFGA, WLNF…FVWI, IIAG…VAII, and GGLF…AYVL. Mg(2+) is bound by residues Asp-541 and Asn-568. Helical transmembrane passes span 577-597, 615-635, 686-706, and 716-736; these read FAIG…MDEV, VFIG…WACA, GALA…LGYY, and VVAA…LFLN. 2 residues coordinate Mg(2+): Asp-743 and Asp-773. Lys-776 contributes to the substrate binding site. The chain crosses the membrane as a helical span at residues 782–802; sequence SIHVLIKMLATITLVMAPIFL.

The protein belongs to the H(+)-translocating pyrophosphatase (TC 3.A.10) family. K(+)-insensitive subfamily. As to quaternary structure, monomer.

The protein localises to the golgi apparatus membrane. It catalyses the reaction diphosphate + H2O + H(+)(in) = 2 phosphate + 2 H(+)(out). The polypeptide is Pyrophosphate-energized membrane proton pump 3 (AVPL2) (Arabidopsis thaliana (Mouse-ear cress)).